A 155-amino-acid chain; its full sequence is 6,7-dimethyl-8-ribityllumazine synthase (155 aa).

Residues Phe-23, 57–59 (AFE), and 81–83 (AVI) contribute to the 5-amino-6-(D-ribitylamino)uracil site. 86 to 87 (AT) is a binding site for (2S)-2-hydroxy-3-oxobutyl phosphate. The Proton donor role is filled by His-89. Position 114 (Phe-114) interacts with 5-amino-6-(D-ribitylamino)uracil. Position 128 (Arg-128) interacts with (2S)-2-hydroxy-3-oxobutyl phosphate.

This sequence belongs to the DMRL synthase family.

It catalyses the reaction (2S)-2-hydroxy-3-oxobutyl phosphate + 5-amino-6-(D-ribitylamino)uracil = 6,7-dimethyl-8-(1-D-ribityl)lumazine + phosphate + 2 H2O + H(+). The protein operates within cofactor biosynthesis; riboflavin biosynthesis; riboflavin from 2-hydroxy-3-oxobutyl phosphate and 5-amino-6-(D-ribitylamino)uracil: step 1/2. Its function is as follows. Catalyzes the formation of 6,7-dimethyl-8-ribityllumazine by condensation of 5-amino-6-(D-ribitylamino)uracil with 3,4-dihydroxy-2-butanone 4-phosphate. This is the penultimate step in the biosynthesis of riboflavin. This is 6,7-dimethyl-8-ribityllumazine synthase from Geotalea daltonii (strain DSM 22248 / JCM 15807 / FRC-32) (Geobacter daltonii).